A 257-amino-acid polypeptide reads, in one-letter code: Probable S-adenosylmethionine-dependent methyltransferase MSMEG_2350/MSMEI_2290 (257 aa).

It belongs to the methyltransferase superfamily.

Functionally, probable S-adenosylmethionine-dependent methyltransferase required for the 6-O-methylation of the polysaccharide backbone of 6-O-methylglucosyl lipopolysaccharides (MGLP). The sequence is that of Probable S-adenosylmethionine-dependent methyltransferase MSMEG_2350/MSMEI_2290 from Mycolicibacterium smegmatis (strain ATCC 700084 / mc(2)155) (Mycobacterium smegmatis).